Here is a 362-residue protein sequence, read N- to C-terminus: Myricetin 3'/5'-O-methyltransferase 1 (362 aa).

S-adenosyl-L-methionine is bound at residue Asp-229. His-267 (proton acceptor) is an active-site residue.

This sequence belongs to the class I-like SAM-binding methyltransferase superfamily. Cation-independent O-methyltransferase family. In terms of assembly, homodimer. Mainly expressed in leaves secreting glandular trichomes types 1 and 4 and, to a lesser extent, in storage trichomes type 6.

The enzyme catalyses myricetin + S-adenosyl-L-methionine = laricitrin + S-adenosyl-L-homocysteine + H(+). It catalyses the reaction laricitrin + S-adenosyl-L-methionine = syringetin + S-adenosyl-L-homocysteine + H(+). The catalysed reaction is a 3'-hydroxyflavone + S-adenosyl-L-methionine = a 3'-methoxyflavone + S-adenosyl-L-homocysteine + H(+). It carries out the reaction a 5'-hydroxy-3'-methoxyflavone + S-adenosyl-L-methionine = a 3',5'-dimethoxyflavone + S-adenosyl-L-homocysteine + H(+). The enzyme catalyses quercetin + S-adenosyl-L-methionine = isorhamnetin + S-adenosyl-L-homocysteine + H(+). It catalyses the reaction rhamnetin + S-adenosyl-L-methionine = rhamnacene + S-adenosyl-L-homocysteine + H(+). The catalysed reaction is 3',4',5,7-tetrahydroxy-3-methoxyflavone + S-adenosyl-L-methionine = 3,3'-O-dimethylquercetin + S-adenosyl-L-homocysteine + H(+). Its pathway is flavonoid metabolism. In terms of biological role, flavonoid 3'/5'-O-methyltransferase involved in the biosynthesis of polymethoxylated flavonoids natural products such as myricetin derivatives, aroma compounds possessing antioxidant properties and exhibiting pharmacological activities such as anti-carcinogen, anti-viral, anti-thrombotic, anti-diabetic, anti-atherosclerotic, and anti-inflammatory effects. Catalyzes S-adenosylmethionine-dependent regioselective 3'/5'-O-methylation of flavonoids; active on various hydroxylated flavonoid substrates, including myricetin and quercetin, but inactive toward kaempferol. Mediates the formation of 3'-methyl derivatives from quercetin, myricetin, 3-methyl quercetin and 7-methyl quercetin (rhamnetin), producing 3'-methyl quercetin (isorhamnetin), 3'-methyl myricetin (laricitrin), 3,3'-dimethyl quercetin (3-O-methylisorhamnetin) and 7,3'-dimethyl quercetin (7-O-methylisorhamnetin), respectively. Triggers the 5'-O-methylation of 3'-methyl myricetin (laricitrin), thus leading to production of 3',5'-dimethyl myricetin (syringetin). This is Myricetin 3'/5'-O-methyltransferase 1 from Solanum habrochaites (Wild tomato).